A 557-amino-acid chain; its full sequence is CTP synthase (557 aa).

Positions 1-270 (MTKYVFVTGG…DAIICEELKL (270 aa)) are amidoligase domain. Residue serine 13 participates in CTP binding. Serine 13 lines the UTP pocket. Residues 14 to 19 (SLGKGI) and aspartate 71 contribute to the ATP site. Mg(2+) is bound by residues aspartate 71 and glutamate 144. CTP is bound by residues 151–153 (DIE), 191–196 (KTKPTQ), and lysine 227. UTP-binding positions include 191 to 196 (KTKPTQ) and lysine 227. The region spanning 295–547 (TIGMVGKYVD…VEAALAHQQS (253 aa)) is the Glutamine amidotransferase type-1 domain. Glycine 356 is a binding site for L-glutamine. Residue cysteine 383 is the Nucleophile; for glutamine hydrolysis of the active site. Residues 384-387 (LGMQ), glutamate 407, and arginine 473 contribute to the L-glutamine site. Active-site residues include histidine 520 and glutamate 522.

The protein belongs to the CTP synthase family. In terms of assembly, homotetramer.

It catalyses the reaction UTP + L-glutamine + ATP + H2O = CTP + L-glutamate + ADP + phosphate + 2 H(+). The enzyme catalyses L-glutamine + H2O = L-glutamate + NH4(+). The catalysed reaction is UTP + NH4(+) + ATP = CTP + ADP + phosphate + 2 H(+). It functions in the pathway pyrimidine metabolism; CTP biosynthesis via de novo pathway; CTP from UDP: step 2/2. Allosterically activated by GTP, when glutamine is the substrate; GTP has no effect on the reaction when ammonia is the substrate. The allosteric effector GTP functions by stabilizing the protein conformation that binds the tetrahedral intermediate(s) formed during glutamine hydrolysis. Inhibited by the product CTP, via allosteric rather than competitive inhibition. Its function is as follows. Catalyzes the ATP-dependent amination of UTP to CTP with either L-glutamine or ammonia as the source of nitrogen. Regulates intracellular CTP levels through interactions with the four ribonucleotide triphosphates. The protein is CTP synthase of Paraburkholderia xenovorans (strain LB400).